The chain runs to 289 residues: Inorganic pyrophosphatase (289 aa).

An N-acetylserine modification is found at Ser2. Lys57 is modified (N6-acetyllysine). Mg(2+) is bound by residues Asp116, Asp121, and Asp153. Residue Lys228 is modified to N6-acetyllysine. Ser250 carries the phosphoserine modification.

The protein belongs to the PPase family. Homodimer. It depends on Mg(2+) as a cofactor.

It is found in the cytoplasm. It carries out the reaction diphosphate + H2O = 2 phosphate + H(+). The polypeptide is Inorganic pyrophosphatase (PPA1) (Macaca fascicularis (Crab-eating macaque)).